The chain runs to 124 residues: Fluoride-specific ion channel FluC (124 aa).

Transmembrane regions (helical) follow at residues 6–26, 34–54, 69–89, and 101–121; these read FAVA…ATWV, FYLA…YLYA, ALII…LDAL, and FAYV…GLAL. Residues glycine 76 and threonine 79 each coordinate Na(+).

The protein belongs to the fluoride channel Fluc/FEX (TC 1.A.43) family.

The protein localises to the cell inner membrane. It carries out the reaction fluoride(in) = fluoride(out). Na(+) is not transported, but it plays an essential structural role and its presence is essential for fluoride channel function. Its function is as follows. Fluoride-specific ion channel. Important for reducing fluoride concentration in the cell, thus reducing its toxicity. The chain is Fluoride-specific ion channel FluC from Stutzerimonas stutzeri (strain A1501) (Pseudomonas stutzeri).